The primary structure comprises 891 residues: uncharacterized protein (891 aa).

This is an uncharacterized protein from Ictalurid herpesvirus 1 (strain Auburn) (IcHV-1).